The following is a 64-amino-acid chain: Translational regulator CsrA (64 aa).

It belongs to the CsrA/RsmA family. Homodimer; the beta-strands of each monomer intercalate to form a hydrophobic core, while the alpha-helices form wings that extend away from the core.

It localises to the cytoplasm. A key translational regulator that binds mRNA to regulate translation initiation and/or mRNA stability. Mediates global changes in gene expression, shifting from rapid growth to stress survival by linking envelope stress, the stringent response and the catabolite repression systems. Usually binds in the 5'-UTR; binding at or near the Shine-Dalgarno sequence prevents ribosome-binding, repressing translation, binding elsewhere in the 5'-UTR can activate translation and/or stabilize the mRNA. Its function is antagonized by small RNA(s). In Methylococcus capsulatus (strain ATCC 33009 / NCIMB 11132 / Bath), this protein is Translational regulator CsrA.